The chain runs to 337 residues: Glyceraldehyde-3-phosphate dehydrogenase 3 (337 aa).

NAD(+) is bound by residues 12-13 and K80; that span reads RM. Residues 152-154 and T183 each bind D-glyceraldehyde 3-phosphate; that span reads SCT. C153 (nucleophile) is an active-site residue. N184 contributes to the NAD(+) binding site. Residues R198, 211–212, and R234 contribute to the D-glyceraldehyde 3-phosphate site; that span reads TG. N317 contacts NAD(+).

This sequence belongs to the glyceraldehyde-3-phosphate dehydrogenase family. As to quaternary structure, homotetramer.

It localises to the cytoplasm. It carries out the reaction D-glyceraldehyde 3-phosphate + phosphate + NAD(+) = (2R)-3-phospho-glyceroyl phosphate + NADH + H(+). It functions in the pathway carbohydrate degradation; glycolysis; pyruvate from D-glyceraldehyde 3-phosphate: step 1/5. The protein operates within carbohydrate biosynthesis; gluconeogenesis. In terms of biological role, catalyzes the oxidative phosphorylation of glyceraldehyde 3-phosphate (G3P) to 1,3-bisphosphoglycerate (BPG) using the cofactor NAD. The first reaction step involves the formation of a hemiacetal intermediate between G3P and a cysteine residue, and this hemiacetal intermediate is then oxidized to a thioester, with concomitant reduction of NAD to NADH. The reduced NADH is then exchanged with the second NAD, and the thioester is attacked by a nucleophilic inorganic phosphate to produce BPG. The chain is Glyceraldehyde-3-phosphate dehydrogenase 3 (gap3) from Nostoc sp. (strain PCC 7120 / SAG 25.82 / UTEX 2576).